Here is a 629-residue protein sequence, read N- to C-terminus: Smc-like protein Sph1 (629 aa).

Coiled-coil stretches lie at residues 139–282 (LETE…LLDD) and 318–487 (AETT…NQFD).

This sequence belongs to the Sph1/Sph2 family.

The protein localises to the cytoplasm. Its function is as follows. May play a role in a late step of replication. This chain is Smc-like protein Sph1 (sph1), found in Halobacterium salinarum (Halobacterium halobium).